Consider the following 208-residue polypeptide: Small ribosomal subunit protein uS4 (208 aa).

In terms of domain architecture, S4 RNA-binding spans 98–161 (QRLDNVVFRM…KSNPQVVRAL (64 aa)).

The protein belongs to the universal ribosomal protein uS4 family. In terms of assembly, part of the 30S ribosomal subunit. Contacts protein S5. The interaction surface between S4 and S5 is involved in control of translational fidelity.

In terms of biological role, one of the primary rRNA binding proteins, it binds directly to 16S rRNA where it nucleates assembly of the body of the 30S subunit. Functionally, with S5 and S12 plays an important role in translational accuracy. This chain is Small ribosomal subunit protein uS4, found in Aliarcobacter butzleri (strain RM4018) (Arcobacter butzleri).